The chain runs to 272 residues: Acetylglutamate kinase (272 aa).

Substrate is bound by residues 41-42 (GG), arginine 63, and asparagine 166.

Belongs to the acetylglutamate kinase family. ArgB subfamily.

It localises to the cytoplasm. It carries out the reaction N-acetyl-L-glutamate + ATP = N-acetyl-L-glutamyl 5-phosphate + ADP. Its pathway is amino-acid biosynthesis; L-arginine biosynthesis; N(2)-acetyl-L-ornithine from L-glutamate: step 2/4. Functionally, catalyzes the ATP-dependent phosphorylation of N-acetyl-L-glutamate. The chain is Acetylglutamate kinase from Anaeromyxobacter dehalogenans (strain 2CP-1 / ATCC BAA-258).